The following is a 1649-amino-acid chain: Formin-like protein 20 (1649 aa).

In terms of domain architecture, Phosphatase tensin-type spans 1–194; it reads MALFRRFFYK…QYISRRNLGS (194 aa). C127 acts as the Phosphocysteine intermediate in catalysis. The region spanning 200–339 is the C2 tensin-type domain; the sequence is DTPLLLDCLI…FKAEVLFSGA (140 aa). 2 disordered regions span residues 416–774 and 787–1245; these read DCAS…PWKS and STSQ…QKKS. Positions 421–483 are enriched in basic and acidic residues; sequence DSNHKHDMHA…RRTVEAKEND (63 aa). Composition is skewed to polar residues over residues 500 to 513 and 585 to 597; these read LESM…SLNK and RINS…TTSL. The span at 598–616 shows a compositional bias: basic and acidic residues; that stretch reads KDGKRATSPDGVIPKDAKT. A compositionally biased stretch (pro residues) spans 648–662; that stretch reads SLPPASPHQAPPPLP. Over residues 665–678 the composition is skewed to polar residues; the sequence is TSEAKTVLHSSQAV. Composition is skewed to pro residues over residues 680-691, 701-711, 722-732, 743-752, and 795-804; these read SPPPPPPPPPLP, LPPPPPPPPPF, LPPPPPPPLP, and SPTPPPPPPA. Residues 809-820 are compositionally biased toward polar residues; it reads GQKSSDLQTSQL. Pro residues-rich tracts occupy residues 821–832, 843–854, and 865–874; these read PSPPPPPPPPPF, LPPPPPPPPPPF, and LPPPPPPPPW. A compositionally biased stretch (polar residues) spans 878–890; it reads YASTFETHEACST. Composition is skewed to pro residues over residues 893–904, 944–960, and 968–1213; these read SPPPPPPPPPFS, PSPP…PPPF, and SPPP…PPPM. In terms of domain architecture, FH2 spans 1237–1635; sequence FGSAAQKKSS…KALKEAEMEK (399 aa).

It belongs to the formin-like family. Class-II subfamily.

In Arabidopsis thaliana (Mouse-ear cress), this protein is Formin-like protein 20 (FH20).